The chain runs to 304 residues: Glycine--tRNA ligase alpha subunit (304 aa).

This sequence belongs to the class-II aminoacyl-tRNA synthetase family. Tetramer of two alpha and two beta subunits.

It localises to the cytoplasm. The catalysed reaction is tRNA(Gly) + glycine + ATP = glycyl-tRNA(Gly) + AMP + diphosphate. The sequence is that of Glycine--tRNA ligase alpha subunit from Tolumonas auensis (strain DSM 9187 / NBRC 110442 / TA 4).